A 91-amino-acid chain; its full sequence is RNA-binding protein Hfq (91 aa).

The Sm domain occupies 9–68; the sequence is DPYLNALRRERIPVSIYLVNGIKLQGQIESFDQFVILLKNTVNQMVYKHAISTVVPARSV. The tract at residues 69 to 91 is disordered; the sequence is SHHNNNHHTAPTEAVENVETQAE.

It belongs to the Hfq family. Homohexamer.

RNA chaperone that binds small regulatory RNA (sRNAs) and mRNAs to facilitate mRNA translational regulation in response to envelope stress, environmental stress and changes in metabolite concentrations. Also binds with high specificity to tRNAs. In Haemophilus influenzae (strain ATCC 51907 / DSM 11121 / KW20 / Rd), this protein is RNA-binding protein Hfq.